The sequence spans 616 residues: Dihydroxy-acid dehydratase (616 aa).

Position 81 (Asp81) interacts with Mg(2+). [2Fe-2S] cluster is bound at residue Cys122. The Mg(2+) site is built by Asp123 and Lys124. Lys124 carries the post-translational modification N6-carboxylysine. A [2Fe-2S] cluster-binding site is contributed by Cys195. Glu491 contacts Mg(2+). Residue Ser517 is the Proton acceptor of the active site.

It belongs to the IlvD/Edd family. In terms of assembly, homodimer. The cofactor is [2Fe-2S] cluster. Requires Mg(2+) as cofactor.

The catalysed reaction is (2R)-2,3-dihydroxy-3-methylbutanoate = 3-methyl-2-oxobutanoate + H2O. It catalyses the reaction (2R,3R)-2,3-dihydroxy-3-methylpentanoate = (S)-3-methyl-2-oxopentanoate + H2O. It participates in amino-acid biosynthesis; L-isoleucine biosynthesis; L-isoleucine from 2-oxobutanoate: step 3/4. The protein operates within amino-acid biosynthesis; L-valine biosynthesis; L-valine from pyruvate: step 3/4. Functions in the biosynthesis of branched-chain amino acids. Catalyzes the dehydration of (2R,3R)-2,3-dihydroxy-3-methylpentanoate (2,3-dihydroxy-3-methylvalerate) into 2-oxo-3-methylpentanoate (2-oxo-3-methylvalerate) and of (2R)-2,3-dihydroxy-3-methylbutanoate (2,3-dihydroxyisovalerate) into 2-oxo-3-methylbutanoate (2-oxoisovalerate), the penultimate precursor to L-isoleucine and L-valine, respectively. This chain is Dihydroxy-acid dehydratase, found in Salmonella paratyphi C (strain RKS4594).